We begin with the raw amino-acid sequence, 57 residues long: Large ribosomal subunit protein bL33 (57 aa).

It belongs to the bacterial ribosomal protein bL33 family.

The sequence is that of Large ribosomal subunit protein bL33 from Shewanella pealeana (strain ATCC 700345 / ANG-SQ1).